We begin with the raw amino-acid sequence, 1221 residues long: 2-oxoglutarate dehydrogenase E1/E2 component (1221 aa).

A 2-oxoglutarate dehydrogenase E1, N-terminal part region spans residues 2–40 (SSASTFGQNAWLVDEMFQQFQKDPKSVDKEWRELFEAQG). Residues 22-107 (QKDPKSVDKE…KLPEPGQTPI (86 aa)) are disordered. The segment covering 23 to 36 (KDPKSVDKEWRELF) has biased composition (basic and acidic residues). Residues 41–52 (GPNTTPATTEAQ) are compositionally biased toward polar residues. The interval 41-89 (GPNTTPATTEAQPSAPKESAKPAPKAAPAAKAAPRVETKPADKTAPKAK) is linker. Residues 53 to 73 (PSAPKESAKPAPKAAPAAKAA) show a composition bias toward low complexity. The span at 74–90 (PRVETKPADKTAPKAKE) shows a compositional bias: basic and acidic residues. Residues 90–337 (ESSVPQQPKL…LRTMSRLLTD (248 aa)) form a succinyltransferase E2 region. The active-site Proton acceptor; for succinyltransferase activity is the H316. The tract at residues 338-1221 (DSFWDEIFDA…KQLIDEAFEA (884 aa)) is 2-oxoglutarate dehydrogenase E1, C-terminal part. R544 is a thiamine diphosphate binding site. 2 residues coordinate 2-oxoglutarate: H583 and S608. S608, L610, D645, A646, A647, and N678 together coordinate thiamine diphosphate. Position 645 (D645) interacts with Mg(2+). The Mg(2+) site is built by N678 and I680. H1017 provides a ligand contact to 2-oxoglutarate. Positions 1035, 1051, 1087, 1090, and 1144 each coordinate acetyl-CoA.

The protein in the N-terminal section; belongs to the alpha-ketoglutarate dehydrogenase family. It in the C-terminal section; belongs to the 2-oxoacid dehydrogenase family. Homodimer. Part of an unusual ODH/PDH supercomplex, consisting of AceE (E1), AceF (E2), and Lpd (E3) together with OdhA (E1+E2). Interacts with the FHA domain of unphosphorylated OdhI via its C-terminal dehydrogenase domain. The cofactor is Mg(2+). Thiamine diphosphate serves as cofactor.

The enzyme catalyses N(6)-[(R)-lipoyl]-L-lysyl-[protein] + 2-oxoglutarate + H(+) = N(6)-[(R)-S(8)-succinyldihydrolipoyl]-L-lysyl-[protein] + CO2. It catalyses the reaction N(6)-[(R)-dihydrolipoyl]-L-lysyl-[protein] + succinyl-CoA = N(6)-[(R)-S(8)-succinyldihydrolipoyl]-L-lysyl-[protein] + CoA. It participates in carbohydrate metabolism; tricarboxylic acid cycle; succinyl-CoA from 2-oxoglutarate (dehydrogenase route): step 1/1. Its activity is regulated as follows. Inhibited by unphosphorylated OdhI, but not by phosphorylated OdhI. Functionally, catalyzes the E1 and E2 reactions as part of 2-oxoglutarate dehydrogenase (ODH) activity, to convert 2-oxoglutarate to succinyl-CoA and CO(2). OdhA has reductase activity with 2-oxoglutarate but does not react with pyruvate, and also displays transsuccinylase but no transacetylase activity. Since OdhA is not lipoylated, the succinyltransferase activity of its E2 domain is dependent on lipoyl residues of the acetyltransferase AceF. The polypeptide is 2-oxoglutarate dehydrogenase E1/E2 component (Corynebacterium glutamicum (strain ATCC 13032 / DSM 20300 / JCM 1318 / BCRC 11384 / CCUG 27702 / LMG 3730 / NBRC 12168 / NCIMB 10025 / NRRL B-2784 / 534)).